We begin with the raw amino-acid sequence, 461 residues long: ADP-specific phosphofructokinase (461 aa).

One can recognise an ADPK domain in the interval 1–457; the sequence is MVRELLEKAR…FTSYLAMLKE (457 aa). 3 residues coordinate Mg(2+): glutamate 268, glutamate 298, and aspartate 441. Catalysis depends on aspartate 441, which acts as the Proton acceptor.

Belongs to the carbohydrate kinase PfkC family. Requires Mg(2+) as cofactor.

The protein resides in the cytoplasm. It carries out the reaction beta-D-fructose 6-phosphate + ADP = beta-D-fructose 1,6-bisphosphate + AMP + H(+). It participates in carbohydrate degradation; glycolysis. Catalyzes the phosphorylation of fructose 6-phosphate to fructose 1,6-bisphosphate using ADP as the phosphate donor. This is ADP-specific phosphofructokinase from Thermococcus kodakarensis (strain ATCC BAA-918 / JCM 12380 / KOD1) (Pyrococcus kodakaraensis (strain KOD1)).